Consider the following 708-residue polypeptide: RNA-directed RNA polymerase catalytic subunit (708 aa).

The 187-residue stretch at 281–467 (RIKEIGMKNQ…GLNVSQKKSF (187 aa)) folds into the RdRp catalytic domain.

The RNA polymerase is composed of three subunits: PB1, PB2 and PA.

The enzyme catalyses RNA(n) + a ribonucleoside 5'-triphosphate = RNA(n+1) + diphosphate. In terms of biological role, RNA-dependent RNA polymerase which is responsible for replication and transcription of virus segments. Binds the promoter sequence of the encapsidated viral RNA. Displays an endonuclease activity involved in cap-stealing. Cleaves cellular pre-mRNA to generate primers for viral transcription. This Infectious salmon anemia virus (isolate Atlantic salmon/Norway/810/9/99) (ISAV) protein is RNA-directed RNA polymerase catalytic subunit.